The following is a 165-amino-acid chain: Lipoprotein signal peptidase (165 aa).

The next 3 helical transmembrane spans lie at Trp12–Gln32, Trp70–Ala90, and Ala102–Val122. Catalysis depends on residues Asp123 and Asp141. A helical membrane pass occupies residues Phe137–Leu157.

It belongs to the peptidase A8 family.

The protein resides in the cell inner membrane. The enzyme catalyses Release of signal peptides from bacterial membrane prolipoproteins. Hydrolyzes -Xaa-Yaa-Zaa-|-(S,diacylglyceryl)Cys-, in which Xaa is hydrophobic (preferably Leu), and Yaa (Ala or Ser) and Zaa (Gly or Ala) have small, neutral side chains.. It functions in the pathway protein modification; lipoprotein biosynthesis (signal peptide cleavage). Its function is as follows. This protein specifically catalyzes the removal of signal peptides from prolipoproteins. The protein is Lipoprotein signal peptidase of Cronobacter sakazakii (strain ATCC BAA-894) (Enterobacter sakazakii).